Consider the following 505-residue polypeptide: MEIDWQIGPASEWRADALIFFGLEEATEPLPGFKRWLDQHGQWLSASPVLRDFQGKYQEVAVCYGPPEANIPRVVMAGLGTREKFDMERLQGSAAAALNRCRELRLARPAFCLRSFYGLPLMVDSALKEALIGGLTGLHRYEELKTRDIAPSAAPSRLVVLNEYETTPELRALPGAAAAAAAGIILARDLVSSPANRATPAFLADCARRLADRDGCRIEVIGLEKAESMGMGGFAAVARGSRQPACMIVLERFPEADRRESPIVFVGKGITFDTGGISLKPRDHLEEMKQDMAGAAAVLGAFETLGRLGSDRHVVGIMPCTENMPGGNAYKPGDVIRTMSGLTVEVISTDAEGRMVLCDALTYAMRYKPAAVFDIATLTAAVIIALGQRVAAVMANRDILAEAVVDIGAQVGERLWPLPLYDLYFDYLKSDVADFKNVGDRTAGSIVGGMFLKQFVPDTTPWAHLDIAGTAWTDKDLGTTPRGGTGFGVRTLTELALQWPDLGIR.

Mn(2+) is bound by residues lysine 268 and aspartate 273. Lysine 280 is a catalytic residue. Mn(2+) is bound by residues aspartate 291, aspartate 350, and glutamate 352. Arginine 354 is a catalytic residue.

The protein belongs to the peptidase M17 family. Mn(2+) is required as a cofactor.

Its subcellular location is the cytoplasm. It catalyses the reaction Release of an N-terminal amino acid, Xaa-|-Yaa-, in which Xaa is preferably Leu, but may be other amino acids including Pro although not Arg or Lys, and Yaa may be Pro. Amino acid amides and methyl esters are also readily hydrolyzed, but rates on arylamides are exceedingly low.. The enzyme catalyses Release of an N-terminal amino acid, preferentially leucine, but not glutamic or aspartic acids.. Functionally, presumably involved in the processing and regular turnover of intracellular proteins. Catalyzes the removal of unsubstituted N-terminal amino acids from various peptides. The polypeptide is Probable cytosol aminopeptidase (Syntrophobacter fumaroxidans (strain DSM 10017 / MPOB)).